Reading from the N-terminus, the 475-residue chain is MEIOTIC F-BOX protein MOF (475 aa).

The segment at 1 to 58 (MRRERDATQIPENPMEGIPQTAAAAAAAAAAEASEPPRKRARVDGGGGGAGEEEEDRL) is disordered. Residues 22 to 33 (AAAAAAAAAAEA) are compositionally biased toward low complexity. The F-box domain occupies 55–91 (EDRLSDLPDCLLEDILAHLGSRQAVQTSVLSRRWRNL).

It belongs to the F-box protein family. FBX subfamily. As to quaternary structure, part of a SCF (SKP1-CUL1-F-box protein) E3 ubiquitin-protein ligase complex. Interacts (via F-box domain) directly with SKP1. Highly expressed in the stem, leaf and in the anther during meiosis. Weakly expressed in roots and lemma/palea.

The protein localises to the nucleus. The protein resides in the chromosome. Its pathway is protein modification; protein ubiquitination. Its function is as follows. Probable component of a SCF (SKP1-CULLIN-F-box protein) E3 ubiquitin-protein ligase complex and may function through the ubiquitin-mediated protein degradation or signaling pathway. Required for male meiotic prophase I progression. Required for telomere bouquet formation, homologous chromosome pairing and for the formation of the synaptonemal complex (SC), which stabilizes initial chromosomal axial associations and promotes crossover formation. Involved in meiotic DNA double-strand break (DSB) end-processing and repair, and is important in the recruitment of DSB repair proteins to the DSB sites. The protein is MEIOTIC F-BOX protein MOF of Oryza sativa subsp. japonica (Rice).